The sequence spans 254 residues: Isoprenyl transferase (254 aa).

The active site involves Asp-12. Asp-12 is a Mg(2+) binding site. Residues 13-16, Trp-17, Arg-25, His-29, and 57-59 contribute to the substrate site; these read GNGR and SSE. Asn-60 functions as the Proton acceptor in the catalytic mechanism. Substrate contacts are provided by residues Trp-61, Arg-63, Arg-180, and 186-188; that span reads RLS. Glu-199 serves as a coordination point for Mg(2+).

This sequence belongs to the UPP synthase family. In terms of assembly, homodimer. It depends on Mg(2+) as a cofactor.

In terms of biological role, catalyzes the condensation of isopentenyl diphosphate (IPP) with allylic pyrophosphates generating different type of terpenoids. In Brucella abortus biovar 1 (strain 9-941), this protein is Isoprenyl transferase.